Reading from the N-terminus, the 626-residue chain is Lipoprotein LpqB (626 aa).

The N-terminal stretch at 1–23 is a signal peptide; the sequence is MIGQANRIAAAVSTACLAVLLAG. Residue Cys24 is the site of N-palmitoyl cysteine attachment. Residue Cys24 is the site of S-diacylglycerol cysteine attachment. Positions 428-457 are disordered; sequence EAEREEDLADDTEPGDTAVGSTERRETDRG. Residues 430 to 441 are compositionally biased toward acidic residues; that stretch reads EREEDLADDTEP.

The protein belongs to the LpqB lipoprotein family.

The protein localises to the cell membrane. This chain is Lipoprotein LpqB, found in Thermobifida fusca (strain YX).